The sequence spans 365 residues: MLIYLFEWLSHYFKGLEVFSSYISVRIIMISITSLLITLALGRPMISWLQKMQIGQIVRDDGPQSHFSKRNTPTMGGVLILSSVIISCLLWGNLTSIYLWILILVVIFFGAIGFFDDYLKLVLKHPKGLRAKHKFALQSIFSIVLAIVLFYLLSKNGQMSLSIPFSKSLYIPMGIVIFVVLAFFIINGSSNAVNLTDGLDGLAIVPVVLVAAGLGIYAYIETNSTLANYLLFNYLGNPGLAEVAVFCAAVCGSGLAFLWFNSHPAEVFMGDVGSLTLGAVLGVIAVMVRQELIFFIMGLLFVVEALSVMLQVGSYKLRNGKRIFRMAPIHHHFELKGWPETKVVIRFWIISLILFLIGFAAIKVR.

Transmembrane regions (helical) follow at residues 22-42 (YISV…LALG), 74-94 (TMGG…WGNL), 95-115 (TSIY…IGFF), 134-154 (KFAL…YLLS), 168-188 (SLYI…IING), 201-221 (GLAI…AYIE), 240-260 (LAEV…FLWF), 267-287 (VFMG…IAVM), 292-312 (LIFF…MLQV), and 342-362 (KVVI…FAAI).

Belongs to the glycosyltransferase 4 family. MraY subfamily. Mg(2+) is required as a cofactor.

It localises to the cell inner membrane. It catalyses the reaction UDP-N-acetyl-alpha-D-muramoyl-L-alanyl-gamma-D-glutamyl-meso-2,6-diaminopimeloyl-D-alanyl-D-alanine + di-trans,octa-cis-undecaprenyl phosphate = di-trans,octa-cis-undecaprenyl diphospho-N-acetyl-alpha-D-muramoyl-L-alanyl-D-glutamyl-meso-2,6-diaminopimeloyl-D-alanyl-D-alanine + UMP. Its pathway is cell wall biogenesis; peptidoglycan biosynthesis. Its function is as follows. Catalyzes the initial step of the lipid cycle reactions in the biosynthesis of the cell wall peptidoglycan: transfers peptidoglycan precursor phospho-MurNAc-pentapeptide from UDP-MurNAc-pentapeptide onto the lipid carrier undecaprenyl phosphate, yielding undecaprenyl-pyrophosphoryl-MurNAc-pentapeptide, known as lipid I. The chain is Phospho-N-acetylmuramoyl-pentapeptide-transferase from Francisella tularensis subsp. holarctica (strain OSU18).